The following is a 571-amino-acid chain: Quinone-dependent D-lactate dehydrogenase (571 aa).

Positions 42–213 constitute an FAD-binding PCMH-type domain; that stretch reads GQGDALAVVF…SKLDDDRIKD (172 aa). Residues 76–80, 84–85, Gly-143, Ser-150, Gly-160, and Val-262 each bind FAD; these read AANTG and GS. The tract at residues 546-571 is disordered; it reads RENDPTNSMNPGIGKTSKRKNWQEVE.

Belongs to the quinone-dependent D-lactate dehydrogenase family. The cofactor is FAD.

It localises to the cell inner membrane. The catalysed reaction is (R)-lactate + a quinone = a quinol + pyruvate. With respect to regulation, inhibited by 2-hydroxy-3-butynoic acid, but not by p-chloromercuribenzoate, n-ethylmaleimide, or 5,5'-dithiobis(2-nitrobenzoic acid). Its function is as follows. Catalyzes the oxidation of D-lactate to pyruvate. Electrons derived from D-lactate oxidation are transferred to the ubiquinone/cytochrome electron transfer chain, where they may be used to provide energy for the active transport of a variety of amino acids and sugars across the membrane. The sequence is that of Quinone-dependent D-lactate dehydrogenase from Escherichia coli (strain K12).